The sequence spans 516 residues: 2-isopropylmalate synthase (516 aa).

Residues 10 to 271 (IRIFDTTLRD…TTGIDTRELA (262 aa)) enclose the Pyruvate carboxyltransferase domain. Mn(2+) is bound by residues D19, H205, H207, and N241. Positions 396 to 516 (ELVSFRVEAG…REKASNRETP (121 aa)) are regulatory domain.

This sequence belongs to the alpha-IPM synthase/homocitrate synthase family. LeuA type 1 subfamily. In terms of assembly, homodimer. Mn(2+) serves as cofactor.

The protein localises to the cytoplasm. The catalysed reaction is 3-methyl-2-oxobutanoate + acetyl-CoA + H2O = (2S)-2-isopropylmalate + CoA + H(+). The protein operates within amino-acid biosynthesis; L-leucine biosynthesis; L-leucine from 3-methyl-2-oxobutanoate: step 1/4. Its function is as follows. Catalyzes the condensation of the acetyl group of acetyl-CoA with 3-methyl-2-oxobutanoate (2-ketoisovalerate) to form 3-carboxy-3-hydroxy-4-methylpentanoate (2-isopropylmalate). The protein is 2-isopropylmalate synthase of Acidimicrobium ferrooxidans (strain DSM 10331 / JCM 15462 / NBRC 103882 / ICP).